The chain runs to 341 residues: Elongation factor Ts (341 aa).

The interval 80–83 is involved in Mg(2+) ion dislocation from EF-Tu; the sequence is TDFV.

This sequence belongs to the EF-Ts family.

It is found in the cytoplasm. Functionally, associates with the EF-Tu.GDP complex and induces the exchange of GDP to GTP. It remains bound to the aminoacyl-tRNA.EF-Tu.GTP complex up to the GTP hydrolysis stage on the ribosome. In Lactobacillus johnsonii (strain CNCM I-12250 / La1 / NCC 533), this protein is Elongation factor Ts.